The sequence spans 55 residues: Small ribosomal subunit protein eS31 (55 aa).

Cys-21, Cys-24, Cys-39, and Cys-42 together coordinate Zn(2+). The C4-type zinc-finger motif lies at 21–42 (CPRCGPGVFLAEHADRFTCGRC).

It belongs to the eukaryotic ribosomal protein eS31 family. In terms of assembly, part of the 30S ribosomal subunit. Requires Zn(2+) as cofactor.

The polypeptide is Small ribosomal subunit protein eS31 (Thermoplasma volcanium (strain ATCC 51530 / DSM 4299 / JCM 9571 / NBRC 15438 / GSS1)).